The primary structure comprises 98 residues: Small ribosomal subunit protein bTHXm (98 aa).

The N-terminal 35 residues, Met-1–Pro-35, are a transit peptide targeting the mitochondrion. The disordered stretch occupies residues Asp-52–Lys-71. Residues Lys-53–Lys-62 show a composition bias toward basic residues.

It belongs to the bacterial ribosomal protein bTHX family. In terms of assembly, component of the mitochondrial ribosome small subunit.

The protein resides in the mitochondrion. The sequence is that of Small ribosomal subunit protein bTHXm from Arabidopsis thaliana (Mouse-ear cress).